A 193-amino-acid polypeptide reads, in one-letter code: uncharacterized protein (193 aa).

4 helical membrane passes run 40 to 56, 63 to 79, 86 to 110, and 117 to 138; these read LYIA…LKLI, AAGL…SSLC, CSGY…IVSC, and FIFP…FQIY. A disordered region spans residues 158–193; sequence TTTKLSRSSSAPDLSCPSLSTQPTSPNQSLSAYKKY.

It belongs to the chlamydial CPn_0442/CT_006/TC_0274 family.

It is found in the cell membrane. This is an uncharacterized protein from Chlamydia muridarum (strain MoPn / Nigg).